A 76-amino-acid chain; its full sequence is Protein RALF-like 26 (76 aa).

An N-terminal signal peptide occupies residues 1 to 22; the sequence is MKAWMIILLVICVAVVVEQSEA. Cysteines 37 and 46 form a disulfide. The N-linked (GlcNAc...) asparagine glycan is linked to asparagine 61. A disulfide bond links cysteine 66 and cysteine 72.

The protein belongs to the plant rapid alkalinization factor (RALF) family.

It is found in the secreted. Cell signaling peptide that may regulate plant stress, growth, and development. Mediates a rapid alkalinization of extracellular space by mediating a transient increase in the cytoplasmic Ca(2+) concentration leading to a calcium-dependent signaling events through a cell surface receptor and a concomitant activation of some intracellular mitogen-activated protein kinases. In Arabidopsis thaliana (Mouse-ear cress), this protein is Protein RALF-like 26 (RALFL26).